Reading from the N-terminus, the 413-residue chain is 1-deoxy-D-xylulose 5-phosphate reductoisomerase (413 aa).

7 residues coordinate NADPH: T13, G14, S15, I16, K40, N41, and N127. K128 is a binding site for 1-deoxy-D-xylulose 5-phosphate. E129 provides a ligand contact to NADPH. D153 contacts Mn(2+). 1-deoxy-D-xylulose 5-phosphate-binding residues include S154, E155, S184, and H207. Mn(2+) is bound at residue E155. G213 contacts NADPH. 4 residues coordinate 1-deoxy-D-xylulose 5-phosphate: S220, N225, K226, and E229. E229 lines the Mn(2+) pocket.

The protein belongs to the DXR family. Mg(2+) is required as a cofactor. It depends on Mn(2+) as a cofactor.

It catalyses the reaction 2-C-methyl-D-erythritol 4-phosphate + NADP(+) = 1-deoxy-D-xylulose 5-phosphate + NADPH + H(+). The protein operates within isoprenoid biosynthesis; isopentenyl diphosphate biosynthesis via DXP pathway; isopentenyl diphosphate from 1-deoxy-D-xylulose 5-phosphate: step 1/6. Functionally, catalyzes the NADPH-dependent rearrangement and reduction of 1-deoxy-D-xylulose-5-phosphate (DXP) to 2-C-methyl-D-erythritol 4-phosphate (MEP). The sequence is that of 1-deoxy-D-xylulose 5-phosphate reductoisomerase from Nitrosomonas eutropha (strain DSM 101675 / C91 / Nm57).